The chain runs to 605 residues: Putative glutaminase 2 (605 aa).

Substrate is bound by residues Ser-213, Asn-262, Glu-308, Asn-315, Tyr-342, Tyr-394, and Val-412. ANK repeat units lie at residues 480 to 509 (DRLI…DLNT) and 513 to 543 (DDRT…DVDK). Positions 569 to 581 (KAMKRPEQHRKDS) are enriched in basic and acidic residues. Residues 569–605 (KAMKRPEQHRKDSVSSLDTDDEIDDDGFPEKPSFTID) are disordered. The segment covering 586–595 (DTDDEIDDDG) has biased composition (acidic residues).

It belongs to the glutaminase family.

The enzyme catalyses L-glutamine + H2O = L-glutamate + NH4(+). The protein is Putative glutaminase 2 (glna-2) of Caenorhabditis elegans.